A 287-amino-acid chain; its full sequence is MEGCVAQSKWLAYCRLMRIDKPIGSLLLLWPTYWALWLAGGTAPGGKLLLVFTCGVFFMRAAGCVINDFADRHFDGHVKRTCQRPLPCGALSEREAKALFVLLVGLSFALVLTLNAMTIWLSVAALTLAWLYPFIKRFSHLPQVILGMAFGWSIPMAYAAVGESLPLSCWLLFAANICWTVAYDTQYAMVDRDDDLRIGIKSTAILFGRYDRLVIGLLQLATLLLLLWVGDLNQLQGAYYWGVLLAAVLFVYQQQLITRRARTSCFRAFMNNNYVGLILFLGILLAL.

8 helical membrane passes run 23–43, 46–66, 99–119, 141–161, 162–182, 213–233, 237–257, and 266–286; these read IGSL…GGTA, GKLL…GCVI, LFVL…AMTI, LPQV…YAAV, GESL…WTVA, LVIG…GDLN, GAYY…QQLI, and FRAF…ILLA.

Belongs to the UbiA prenyltransferase family. Requires Mg(2+) as cofactor.

Its subcellular location is the cell inner membrane. It catalyses the reaction all-trans-octaprenyl diphosphate + 4-hydroxybenzoate = 4-hydroxy-3-(all-trans-octaprenyl)benzoate + diphosphate. It functions in the pathway cofactor biosynthesis; ubiquinone biosynthesis. In terms of biological role, catalyzes the prenylation of para-hydroxybenzoate (PHB) with an all-trans polyprenyl group. Mediates the second step in the final reaction sequence of ubiquinone-8 (UQ-8) biosynthesis, which is the condensation of the polyisoprenoid side chain with PHB, generating the first membrane-bound Q intermediate 3-octaprenyl-4-hydroxybenzoate. The protein is 4-hydroxybenzoate octaprenyltransferase of Edwardsiella ictaluri (strain 93-146).